Consider the following 268-residue polypeptide: NH(3)-dependent NAD(+) synthetase (268 aa).

46–53 (GVSGGQDS) serves as a coordination point for ATP. D52 is a Mg(2+) binding site. R140 is a binding site for deamido-NAD(+). ATP is bound at residue T160. Residue E165 coordinates Mg(2+). Residues K173 and D180 each coordinate deamido-NAD(+). K189 lines the ATP pocket. Residue 260–261 (HK) participates in deamido-NAD(+) binding.

The protein belongs to the NAD synthetase family. As to quaternary structure, homodimer.

It catalyses the reaction deamido-NAD(+) + NH4(+) + ATP = AMP + diphosphate + NAD(+) + H(+). The protein operates within cofactor biosynthesis; NAD(+) biosynthesis; NAD(+) from deamido-NAD(+) (ammonia route): step 1/1. Its function is as follows. Catalyzes the ATP-dependent amidation of deamido-NAD to form NAD. Uses ammonia as a nitrogen source. The polypeptide is NH(3)-dependent NAD(+) synthetase (Buchnera aphidicola subsp. Acyrthosiphon pisum (strain APS) (Acyrthosiphon pisum symbiotic bacterium)).